A 248-amino-acid polypeptide reads, in one-letter code: DNA polymerase sliding clamp 2 (248 aa).

This sequence belongs to the PCNA family. In terms of assembly, the subunits circularize to form a toroid; DNA passes through its center. Replication factor C (RFC) is required to load the toroid on the DNA. Forms a dimeric complex with PCNA3 and trimeric complexes PCNA123 and PCNA323; does not form homotrimers. Crystal structures show a heterotetramer of 2 PCNA2 and 2 PCNA3, which would be large enough to clamp a Holliday junction.

Functionally, sliding clamp subunit that acts as a moving platform for DNA processing. Responsible for tethering the catalytic subunit of DNA polymerase and other proteins to DNA during high-speed replication. Both trimeric complexes inhibit DNA ligase and both 3'-5' and 5'-3' activity of Hel308 (Hjm) helicase, but stimulate Hjc, the Holliday junction cleavage enzyme. The protein is DNA polymerase sliding clamp 2 of Sulfurisphaera tokodaii (strain DSM 16993 / JCM 10545 / NBRC 100140 / 7) (Sulfolobus tokodaii).